The sequence spans 338 residues: RNA 3'-terminal phosphate cyclase (338 aa).

Residues Gln103 and 283-287 (YLADQ) each bind ATP. The Tele-AMP-histidine intermediate role is filled by His308.

Belongs to the RNA 3'-terminal cyclase family. Type 1 subfamily.

The protein localises to the cytoplasm. The enzyme catalyses a 3'-end 3'-phospho-ribonucleotide-RNA + ATP = a 3'-end 2',3'-cyclophospho-ribonucleotide-RNA + AMP + diphosphate. In terms of biological role, catalyzes the conversion of 3'-phosphate to a 2',3'-cyclic phosphodiester at the end of RNA. The mechanism of action of the enzyme occurs in 3 steps: (A) adenylation of the enzyme by ATP; (B) transfer of adenylate to an RNA-N3'P to produce RNA-N3'PP5'A; (C) and attack of the adjacent 2'-hydroxyl on the 3'-phosphorus in the diester linkage to produce the cyclic end product. The biological role of this enzyme is unknown but it is likely to function in some aspects of cellular RNA processing. The sequence is that of RNA 3'-terminal phosphate cyclase from Shigella boydii serotype 4 (strain Sb227).